Consider the following 353-residue polypeptide: Farnesyl pyrophosphate synthase (353 aa).

Lysine 57, arginine 60, and glutamine 96 together coordinate isopentenyl diphosphate. Position 57 is an N6-(2-hydroxyisobutyryl)lysine; alternate (lysine 57). An N6-acetyllysine; alternate modification is found at lysine 57. Positions 103 and 107 each coordinate Mg(2+). Arginine 112 serves as a coordination point for dimethylallyl diphosphate. Arginine 113 contributes to the isopentenyl diphosphate binding site. Residues lysine 200, threonine 201, glutamine 240, lysine 257, and lysine 266 each contribute to the dimethylallyl diphosphate site.

The protein belongs to the FPP/GGPP synthase family. As to quaternary structure, homodimer. Interacts with RSAD2. Requires Mg(2+) as cofactor. In terms of tissue distribution, testis, liver, kidney, brain and adrenal gland.

It is found in the cytoplasm. It catalyses the reaction isopentenyl diphosphate + dimethylallyl diphosphate = (2E)-geranyl diphosphate + diphosphate. The catalysed reaction is isopentenyl diphosphate + (2E)-geranyl diphosphate = (2E,6E)-farnesyl diphosphate + diphosphate. It participates in isoprenoid biosynthesis; farnesyl diphosphate biosynthesis; farnesyl diphosphate from geranyl diphosphate and isopentenyl diphosphate: step 1/1. It functions in the pathway isoprenoid biosynthesis; geranyl diphosphate biosynthesis; geranyl diphosphate from dimethylallyl diphosphate and isopentenyl diphosphate: step 1/1. Inactivated by interferon-induced RSAD2. This inactivation may result of disruption of lipid rafts at the plasma membrane, and thus have an antiviral effect since many enveloped viruses need lipid rafts to bud efficiently out of the cell. Its function is as follows. Key enzyme in isoprenoid biosynthesis which catalyzes the formation of farnesyl diphosphate (FPP), a precursor for several classes of essential metabolites including sterols, dolichols, carotenoids, and ubiquinones. FPP also serves as substrate for protein farnesylation and geranylgeranylation. Catalyzes the sequential condensation of isopentenyl pyrophosphate with the allylic pyrophosphates, dimethylallyl pyrophosphate, and then with the resultant geranylpyrophosphate to the ultimate product farnesyl pyrophosphate. The sequence is that of Farnesyl pyrophosphate synthase (Fdps) from Rattus norvegicus (Rat).